The primary structure comprises 264 residues: Neurexophilin-2 (264 aa).

Positions 1–22 (MRLRPLPLVVVPGLLQLLFCDS) are cleaved as a signal peptide. An II region spans residues 23 to 90 (KEVVHATEGL…WDWLANITEI (68 aa)). Asparagine 86, asparagine 139, asparagine 149, and asparagine 155 each carry an N-linked (GlcNAc...) asparagine glycan. Residues 91–169 (QEPLARTKRR…LVPPSKVVEF (79 aa)) form an III region. The interval 170 to 178 (EVSPQSTLE) is IV (linker domain). A v (Cys-rich) region spans residues 179–264 (TKESKSFNCR…HSETPYLSSG (86 aa)).

It belongs to the neurexophilin family. May be proteolytically processed at the boundary between the N-terminal non-conserved and the central conserved domain in neuron-like cells. In terms of tissue distribution, expressed in brain and kidney.

The protein localises to the secreted. Functionally, may be signaling molecules that resemble neuropeptides and that act by binding to alpha-neurexins and possibly other receptors. This chain is Neurexophilin-2 (NXPH2), found in Homo sapiens (Human).